A 296-amino-acid chain; its full sequence is 4-hydroxy-tetrahydrodipicolinate synthase (296 aa).

Residue T49 participates in pyruvate binding. Y137 functions as the Proton donor/acceptor in the catalytic mechanism. Catalysis depends on K166, which acts as the Schiff-base intermediate with substrate. I208 serves as a coordination point for pyruvate.

This sequence belongs to the DapA family. In terms of assembly, homotetramer; dimer of dimers.

The protein localises to the cytoplasm. The catalysed reaction is L-aspartate 4-semialdehyde + pyruvate = (2S,4S)-4-hydroxy-2,3,4,5-tetrahydrodipicolinate + H2O + H(+). It functions in the pathway amino-acid biosynthesis; L-lysine biosynthesis via DAP pathway; (S)-tetrahydrodipicolinate from L-aspartate: step 3/4. Its function is as follows. Catalyzes the condensation of (S)-aspartate-beta-semialdehyde [(S)-ASA] and pyruvate to 4-hydroxy-tetrahydrodipicolinate (HTPA). The protein is 4-hydroxy-tetrahydrodipicolinate synthase of Chlorobaculum parvum (strain DSM 263 / NCIMB 8327) (Chlorobium vibrioforme subsp. thiosulfatophilum).